Consider the following 126-residue polypeptide: Aspartate 1-decarboxylase (126 aa).

Ser-25 acts as the Schiff-base intermediate with substrate; via pyruvic acid in catalysis. A Pyruvic acid (Ser) modification is found at Ser-25. Thr-57 is a substrate binding site. The Proton donor role is filled by Tyr-58. 73–75 (GAA) contributes to the substrate binding site.

Belongs to the PanD family. In terms of assembly, heterooctamer of four alpha and four beta subunits. The cofactor is pyruvate. Post-translationally, is synthesized initially as an inactive proenzyme, which is activated by self-cleavage at a specific serine bond to produce a beta-subunit with a hydroxyl group at its C-terminus and an alpha-subunit with a pyruvoyl group at its N-terminus.

Its subcellular location is the cytoplasm. It carries out the reaction L-aspartate + H(+) = beta-alanine + CO2. The protein operates within cofactor biosynthesis; (R)-pantothenate biosynthesis; beta-alanine from L-aspartate: step 1/1. Functionally, catalyzes the pyruvoyl-dependent decarboxylation of aspartate to produce beta-alanine. This is Aspartate 1-decarboxylase from Salmonella arizonae (strain ATCC BAA-731 / CDC346-86 / RSK2980).